A 331-amino-acid polypeptide reads, in one-letter code: Glyoxylate reductase (331 aa).

Residues 158 to 161, 180 to 182, and 239 to 241 contribute to the NADP(+) site; these read FGRI, SRT, and TSR. Catalysis depends on residues arginine 241 and glutamate 270. Histidine 288 (proton donor) is an active-site residue. 288–290 is an NADP(+) binding site; sequence HIG.

This sequence belongs to the D-isomer specific 2-hydroxyacid dehydrogenase family. GyaR subfamily. Homodimer.

It is found in the cytoplasm. The catalysed reaction is glycolate + NAD(+) = glyoxylate + NADH + H(+). This Thermococcus litoralis (strain ATCC 51850 / DSM 5473 / JCM 8560 / NS-C) protein is Glyoxylate reductase.